A 966-amino-acid chain; its full sequence is Leucine--tRNA ligase (966 aa).

Residues 71-82 (PYPSGAGLHVGH) carry the 'HIGH' region motif. Residues 561–580 (YSPRTFDPDDADTKPETPLS) form a disordered region. Residues 571–580 (ADTKPETPLS) are compositionally biased toward basic and acidic residues. Positions 734 to 738 (KMGKS) match the 'KMSKS' region motif. Residue Lys-737 participates in ATP binding.

Belongs to the class-I aminoacyl-tRNA synthetase family.

It is found in the cytoplasm. The enzyme catalyses tRNA(Leu) + L-leucine + ATP = L-leucyl-tRNA(Leu) + AMP + diphosphate. The polypeptide is Leucine--tRNA ligase (Streptomyces coelicolor (strain ATCC BAA-471 / A3(2) / M145)).